Reading from the N-terminus, the 753-residue chain is Small G protein signaling modulator 3 homolog (753 aa).

In terms of domain architecture, Rab-GAP TBC spans 115 to 306 (GIPHSMRPQL…RIWDFFFYQG (192 aa)). In terms of domain architecture, SH3 spans 482–541 (SRRRRAKALLDFERHDDDELGFRKNDIITIISQKDEHCWVGELNGLRGWFPAKFVDILDE). Residues 557 to 720 (GITDLIRGTL…FAFSLSPDWE (164 aa)) enclose the RUN domain.

It belongs to the small G protein signaling modulator family.

This Xenopus laevis (African clawed frog) protein is Small G protein signaling modulator 3 homolog (sgsm3).